A 488-amino-acid polypeptide reads, in one-letter code: L-arabinose isomerase 2 (488 aa).

Positions 306, 331, 348, and 447 each coordinate Mn(2+).

Belongs to the arabinose isomerase family. Requires Mn(2+) as cofactor.

The enzyme catalyses beta-L-arabinopyranose = L-ribulose. Its pathway is carbohydrate degradation; L-arabinose degradation via L-ribulose; D-xylulose 5-phosphate from L-arabinose (bacterial route): step 1/3. Catalyzes the conversion of L-arabinose to L-ribulose. The polypeptide is L-arabinose isomerase 2 (Clostridium acetobutylicum (strain ATCC 824 / DSM 792 / JCM 1419 / IAM 19013 / LMG 5710 / NBRC 13948 / NRRL B-527 / VKM B-1787 / 2291 / W)).